The chain runs to 104 residues: Nucleoid-associated protein Ccon26_18480 (104 aa).

Basic and acidic residues predominate over residues D16 to G34. Residues D16 to G38 form a disordered region.

It belongs to the YbaB/EbfC family. Homodimer.

Its subcellular location is the cytoplasm. The protein localises to the nucleoid. In terms of biological role, binds to DNA and alters its conformation. May be involved in regulation of gene expression, nucleoid organization and DNA protection. The sequence is that of Nucleoid-associated protein Ccon26_18480 from Campylobacter concisus (strain 13826).